Here is a 359-residue protein sequence, read N- to C-terminus: Uroporphyrinogen decarboxylase (359 aa).

Residues 36 to 40 (RQAGR), aspartate 85, tyrosine 160, serine 215, and histidine 338 contribute to the substrate site.

Belongs to the uroporphyrinogen decarboxylase family. In terms of assembly, homodimer.

It is found in the cytoplasm. The catalysed reaction is uroporphyrinogen III + 4 H(+) = coproporphyrinogen III + 4 CO2. The protein operates within porphyrin-containing compound metabolism; protoporphyrin-IX biosynthesis; coproporphyrinogen-III from 5-aminolevulinate: step 4/4. Its function is as follows. Catalyzes the decarboxylation of four acetate groups of uroporphyrinogen-III to yield coproporphyrinogen-III. This is Uroporphyrinogen decarboxylase from Corynebacterium efficiens (strain DSM 44549 / YS-314 / AJ 12310 / JCM 11189 / NBRC 100395).